A 176-amino-acid chain; its full sequence is dCTP deaminase (176 aa).

Residues 102–107 and aspartate 118 contribute to the dCTP site; that span reads RSTFAR. Glutamate 128 serves as the catalytic Proton donor/acceptor. DCTP contacts are provided by tyrosine 160, lysine 166, and glutamine 167.

It belongs to the dCTP deaminase family. In terms of assembly, homotrimer.

It catalyses the reaction dCTP + H2O + H(+) = dUTP + NH4(+). It functions in the pathway pyrimidine metabolism; dUMP biosynthesis; dUMP from dCTP (dUTP route): step 1/2. Its function is as follows. Catalyzes the deamination of dCTP to dUTP. This Staphylothermus marinus (strain ATCC 43588 / DSM 3639 / JCM 9404 / F1) protein is dCTP deaminase.